The primary structure comprises 520 residues: Glycosyl hydrolase family 109 protein 5 (520 aa).

Residues methionine 1 to alanine 27 form the signal peptide. Residues methionine 77–arginine 78, aspartate 99, tryptophan 147–histidine 150, glutamate 167–valine 168, and asparagine 196 contribute to the NAD(+) site. Substrate-binding positions include tyrosine 225, arginine 248, tyrosine 260 to histidine 263, and tyrosine 338. NAD(+) is bound at residue tyrosine 260.

The protein belongs to the Gfo/Idh/MocA family. Glycosyl hydrolase 109 subfamily. It depends on NAD(+) as a cofactor.

In terms of biological role, glycosidase. The polypeptide is Glycosyl hydrolase family 109 protein 5 (Phocaeicola vulgatus (strain ATCC 8482 / DSM 1447 / JCM 5826 / CCUG 4940 / NBRC 14291 / NCTC 11154) (Bacteroides vulgatus)).